A 159-amino-acid polypeptide reads, in one-letter code: MTHCCSPCCQPTCCRTTCWQPTTVTTCSSTPCCQPSCCVSSCCQPCCHPTCCQNTCCRTTCCQPICVTSCCQPSCCSTPCCQPTCCGSSCGQSSSCAPVYCRRTCYHPTSVCLPGCLNQSCGSNCCQPCCRPACCETTCCRTTCFQPTCVYSCCQPSCC.

Tandem repeats lie at residues 8 to 12 (CCQPT), 13 to 17 (CCRTT), 32 to 36 (CCQPS), 37 to 41 (CCVSS), 46 to 50 (CCHPT), 51 to 55 (CCQNT), 56 to 60 (CCRTT), 61 to 65 (CCQPI), 70 to 74 (CCQPS), 75 to 79 (CCSTP), 80 to 84 (CCQPT), 85 to 89 (CCGSS), 129 to 133 (CCRPA), 134 to 138 (CCETT), 139 to 143 (CCRTT), and 153 to 157 (CCQPS). The tract at residues 8–157 (CCQPTCCRTT…TCVYSCCQPS (150 aa)) is 16 X 5 AA repeats of C-C-[RQVSHE]-[SPTN]-[TASPI].

It belongs to the KRTAP type 9 family. As to quaternary structure, interacts with hair keratins.

In terms of biological role, in the hair cortex, hair keratin intermediate filaments are embedded in an interfilamentous matrix, consisting of hair keratin-associated proteins (KRTAP), which are essential for the formation of a rigid and resistant hair shaft through their extensive disulfide bond cross-linking with abundant cysteine residues of hair keratins. The matrix proteins include the high-sulfur and high-glycine-tyrosine keratins. The protein is Keratin-associated protein 9-3 (KRTAP9-3) of Homo sapiens (Human).